Reading from the N-terminus, the 412-residue chain is Aspartate kinase Ask_LysC (412 aa).

The ACT domain occupies 265–332; sequence LTIRGVPDTP…QGIAAEMGAR (68 aa).

This sequence belongs to the aspartokinase family.

Its subcellular location is the cytoplasm. The catalysed reaction is L-aspartate + ATP = 4-phospho-L-aspartate + ADP. It functions in the pathway amino-acid biosynthesis; L-lysine biosynthesis via DAP pathway; (S)-tetrahydrodipicolinate from L-aspartate: step 1/4. Its pathway is amino-acid biosynthesis; L-methionine biosynthesis via de novo pathway; L-homoserine from L-aspartate: step 1/3. The protein operates within amino-acid biosynthesis; L-threonine biosynthesis; L-threonine from L-aspartate: step 1/5. With respect to regulation, allosterically and strongly feedback inhibited by tryptophan. Addition of lysine alone slightly enhances activity. The simultaneous addition of lysine and tryptophan leads to very strong feedback inhibition of the enzyme. The feedback control by tryptophan is reduced in the presence of the compatible solutes hydroxyectoine or ectoine. In terms of biological role, involved in the biosynthesis of L-aspartate-beta-semialdehyde which is a central intermediate in the biosynthesis of different amino acids (L-lysine, L-methionine, L-threonine). Catalyzes the phosphorylation of the beta-carboxyl group of L-aspartate to yield 4-phospho-L-aspartate. This Stutzerimonas stutzeri (strain A1501) (Pseudomonas stutzeri) protein is Aspartate kinase Ask_LysC (lysC).